The primary structure comprises 83 residues: NAD(P)H-quinone oxidoreductase subunit L (83 aa).

2 consecutive transmembrane segments (helical) span residues 18-38 (ILAY…ALFF) and 53-73 (LLVY…APFL).

This sequence belongs to the complex I NdhL subunit family. NDH-1 can be composed of about 15 different subunits; different subcomplexes with different compositions have been identified which probably have different functions.

It localises to the cellular thylakoid membrane. It carries out the reaction a plastoquinone + NADH + (n+1) H(+)(in) = a plastoquinol + NAD(+) + n H(+)(out). It catalyses the reaction a plastoquinone + NADPH + (n+1) H(+)(in) = a plastoquinol + NADP(+) + n H(+)(out). In terms of biological role, NDH-1 shuttles electrons from an unknown electron donor, via FMN and iron-sulfur (Fe-S) centers, to quinones in the respiratory and/or the photosynthetic chain. The immediate electron acceptor for the enzyme in this species is believed to be plastoquinone. Couples the redox reaction to proton translocation, and thus conserves the redox energy in a proton gradient. Cyanobacterial NDH-1 also plays a role in inorganic carbon-concentration. This is NAD(P)H-quinone oxidoreductase subunit L from Parasynechococcus marenigrum (strain WH8102).